A 502-amino-acid chain; its full sequence is NAD(P)H-quinone oxidoreductase chain 4, chloroplastic (502 aa).

The next 14 helical transmembrane spans lie at Phe4–Val24, Tyr37–Phe57, Gly86–Ala106, Ser113–Phe131, Leu136–Met156, Phe169–Leu189, Gly210–Ile230, His244–Val264, Ala274–Ala294, Ile307–Asp327, Gly332–Gly352, Leu388–Thr408, Ile418–Met438, and Leu464–Val484.

It belongs to the complex I subunit 4 family.

The protein localises to the plastid. Its subcellular location is the chloroplast thylakoid membrane. It carries out the reaction a plastoquinone + NADH + (n+1) H(+)(in) = a plastoquinol + NAD(+) + n H(+)(out). It catalyses the reaction a plastoquinone + NADPH + (n+1) H(+)(in) = a plastoquinol + NADP(+) + n H(+)(out). This chain is NAD(P)H-quinone oxidoreductase chain 4, chloroplastic, found in Calycanthus floridus var. glaucus (Eastern sweetshrub).